Reading from the N-terminus, the 175-residue chain is Vitamin K epoxide reductase complex subunit 1-like protein 1 (175 aa).

At 1-12 the chain is on the cytoplasmic side; sequence MAAPVLRVSTPR. Residues 13 to 35 traverse the membrane as a helical segment; it reads WERIARVLVCLLGILLSLYAFHV. Topologically, residues 36 to 86 are lumenal; it reads EREHARDPSYKALCDVSSSISCSKVFGSRWGRGFGLLGSIFGNDSALNQPN. Residues Cys49 and Cys57 are joined by a disulfide bond. Residue Asn86 coordinates (S)-warfarin. A helical transmembrane segment spans residues 87–101; the sequence is SVYGIVFYAFQLLLG. Residues 102–106 lie on the Cytoplasmic side of the membrane; sequence MTVSA. The chain crosses the membrane as a helical span at residues 107–134; sequence MAALILMTTSIMSVVGSLYLGYILYFVL. Residues 135–137 are Lumenal-facing; it reads KDL. Cysteines 138 and 141 form a disulfide. The helical transmembrane segment at 138-159 threads the bilayer; the sequence is CVICVTTYALNFILFVLNYKRL. The phylloquinone site is built by Cys141 and Tyr145. (S)-warfarin is bound at residue Tyr145. The Cytoplasmic segment spans residues 160-175; sequence VYLNEAWKQKLQAKQD.

The protein belongs to the VKOR family.

The protein localises to the endoplasmic reticulum membrane. It carries out the reaction phylloquinone + [protein]-disulfide + H2O = 2,3-epoxyphylloquinone + [protein]-dithiol. The catalysed reaction is phylloquinol + [protein]-disulfide = phylloquinone + [protein]-dithiol. Inhibited by warfarin (coumadin). Warfarin locks VKORC1 in both redox states into the closed conformation. Functionally, involved in vitamin K metabolism. Can reduce inactive vitamin K 2,3-epoxide to active vitamin K, and may contribute to vitamin K-mediated protection against oxidative stress. Plays a role in vitamin K-dependent gamma-carboxylation of Glu residues in target proteins. In Takifugu rubripes (Japanese pufferfish), this protein is Vitamin K epoxide reductase complex subunit 1-like protein 1 (vkorc1l1).